Here is a 163-residue protein sequence, read N- to C-terminus: Retinoic acid receptor responder protein 2 (163 aa).

Residues 1–20 (MKYLLISLALWLGMVGIHGT) form the signal peptide. Intrachain disulfides connect Cys-79–Cys-89, Cys-100–Cys-119, and Cys-103–Cys-135. Residues 158–163 (RALKHK) constitute a propeptide that is removed on maturation.

Post-translationally, secreted in an inactive precursor form, prochemerin, which is proteolytically processed by a variety of extracellular proteases to generate forms with differing levels of bioactivity. For example, the removal of six amino acids results in chemerin-157, which exhibits the highest activity, while removal of seven amino acids results in chemerin-156 which has slightly less activity. Some proteases are able to cleave at more than one site and chemerin forms may be sequentially processed by different enzymes to modulate activity levels. The coordinated expression and activity of chemerin-modifying enzymes is essential for regulating its bioactivation, inactivation and, consequently, biological function. Cathepsin G cleaves seven C-terminal amino acids from prochemerin (chemerin-156), elastase is able to cleave six (chemerin-157), eight (chemerin-155) or eleven (chemerin-152), plasmin cleaves five amino acids (chemerin-158), and tryptase cleaves five (chemerin-158) or eight (chemerin-155). Multiple cleavages might be required to fully activate chemerin, with an initial tryptase cleavage resulting in chemerin with low activity (chemerin-158), and a second cleavage by carboxypeptidase N or B producing highly active chemerin (chemerin-157).

Its subcellular location is the secreted. Its function is as follows. Adipocyte-secreted protein (adipokine) that regulates adipogenesis, metabolism and inflammation through activation of the chemokine-like receptor 1 (CMKLR1). Also acts as a ligand for CMKLR2. Can also bind to C-C chemokine receptor-like 2 (CCRL2), but with a lower affinity than it does to CMKLR1 or CMKLR2. Positively regulates adipocyte differentiation, modulates the expression of adipocyte genes involved in lipid and glucose metabolism and might play a role in angiogenesis, a process essential for the expansion of white adipose tissue. Also acts as a pro-inflammatory adipokine, causing an increase in secretion of pro-inflammatory and prodiabetic adipokines, which further impair adipose tissue metabolic function and have negative systemic effects including impaired insulin sensitivity, altered glucose and lipid metabolism, and a decrease in vascular function in other tissues. Can have both pro- and anti-inflammatory properties depending on the modality of enzymatic cleavage by different classes of proteases. Acts as a chemotactic factor for leukocyte populations expressing CMKLR1, particularly immature plasmacytoid dendritic cells, but also immature myeloid DCs, macrophages and natural killer cells. Exerts an anti-inflammatory role by preventing TNF/TNFA-induced VCAM1 expression and monocytes adhesion in vascular endothelial cells. The effect is mediated via inhibiting activation of NF-kappa-B and CRK/p38 through stimulation of AKT1/NOS3 signaling and nitric oxide production. Its dual role in inflammation and metabolism might provide a link Exhibits an antimicrobial function in the skin. This Cricetulus griseus (Chinese hamster) protein is Retinoic acid receptor responder protein 2 (RARRES2).